We begin with the raw amino-acid sequence, 152 residues long: Deoxyuridine 5'-triphosphate nucleotidohydrolase (152 aa).

Substrate contacts are provided by residues 71–73, Asn84, 88–90, and Met98; these read RSG and LID.

It belongs to the dUTPase family. It depends on Mg(2+) as a cofactor.

The enzyme catalyses dUTP + H2O = dUMP + diphosphate + H(+). It participates in pyrimidine metabolism; dUMP biosynthesis; dUMP from dCTP (dUTP route): step 2/2. This enzyme is involved in nucleotide metabolism: it produces dUMP, the immediate precursor of thymidine nucleotides and it decreases the intracellular concentration of dUTP so that uracil cannot be incorporated into DNA. This is Deoxyuridine 5'-triphosphate nucleotidohydrolase from Shewanella loihica (strain ATCC BAA-1088 / PV-4).